A 602-amino-acid chain; its full sequence is Elongation factor 4 (602 aa).

A tr-type G domain is found at 7–189 (SRIRNFSIIA…SIVQQVPPPA (183 aa)). GTP is bound by residues 19 to 24 (DHGKST) and 136 to 139 (NKID).

The protein belongs to the TRAFAC class translation factor GTPase superfamily. Classic translation factor GTPase family. LepA subfamily.

Its subcellular location is the cell inner membrane. The enzyme catalyses GTP + H2O = GDP + phosphate + H(+). Functionally, required for accurate and efficient protein synthesis under certain stress conditions. May act as a fidelity factor of the translation reaction, by catalyzing a one-codon backward translocation of tRNAs on improperly translocated ribosomes. Back-translocation proceeds from a post-translocation (POST) complex to a pre-translocation (PRE) complex, thus giving elongation factor G a second chance to translocate the tRNAs correctly. Binds to ribosomes in a GTP-dependent manner. In Picosynechococcus sp. (strain ATCC 27264 / PCC 7002 / PR-6) (Agmenellum quadruplicatum), this protein is Elongation factor 4.